The primary structure comprises 56 residues: UPF0434 protein CbuK_1382 (56 aa).

This sequence belongs to the UPF0434 family.

The protein is UPF0434 protein CbuK_1382 of Coxiella burnetii (strain CbuK_Q154) (Coxiella burnetii (strain Q154)).